The chain runs to 431 residues: Histidinol dehydrogenase (431 aa).

Tyr-129, Gln-191, and Asn-214 together coordinate NAD(+). Residues Ser-237, Gln-259, and His-262 each coordinate substrate. Gln-259 and His-262 together coordinate Zn(2+). Residues Glu-327 and His-328 each act as proton acceptor in the active site. The substrate site is built by His-328, Asp-361, Glu-415, and His-420. Zn(2+) is bound at residue Asp-361. His-420 is a Zn(2+) binding site.

It belongs to the histidinol dehydrogenase family. It depends on Zn(2+) as a cofactor.

It catalyses the reaction L-histidinol + 2 NAD(+) + H2O = L-histidine + 2 NADH + 3 H(+). It participates in amino-acid biosynthesis; L-histidine biosynthesis; L-histidine from 5-phospho-alpha-D-ribose 1-diphosphate: step 9/9. Functionally, catalyzes the sequential NAD-dependent oxidations of L-histidinol to L-histidinaldehyde and then to L-histidine. The sequence is that of Histidinol dehydrogenase (hisD) from Lactococcus lactis subsp. lactis (strain IL1403) (Streptococcus lactis).